A 328-amino-acid polypeptide reads, in one-letter code: Malate dehydrogenase (328 aa).

11–17 is a binding site for NAD(+); that stretch reads GAAGQIG. Positions 94 and 100 each coordinate substrate. NAD(+) contacts are provided by residues N107, Q114, and 131 to 133; that span reads VGN. The substrate site is built by N133 and R164. H189 acts as the Proton acceptor in catalysis.

It belongs to the LDH/MDH superfamily. MDH type 2 family.

It catalyses the reaction (S)-malate + NAD(+) = oxaloacetate + NADH + H(+). Functionally, catalyzes the reversible oxidation of malate to oxaloacetate. The sequence is that of Malate dehydrogenase from Xanthomonas euvesicatoria pv. vesicatoria (strain 85-10) (Xanthomonas campestris pv. vesicatoria).